The primary structure comprises 831 residues: Vi polysaccharide biosynthesis protein TviD (831 aa).

It functions in the pathway glycan metabolism; Vi-antigen biosynthesis. It participates in capsule biogenesis; capsule polysaccharide biosynthesis. Functionally, may be required for maturation of the Vi polysaccharide. This is Vi polysaccharide biosynthesis protein TviD (tviD) from Salmonella typhi.